Consider the following 410-residue polypeptide: MNPQLNNPNLPIYMDYQATTPLDPRVMEAMLPYFTTKFGNPHSRSHSFGWEAENAVEEARSRVARLIGADTKEIIFTSGATESNNLAIKGIAKFYGNKKNHIITVVSEHKCVLDACRHLEQEGIKITYLPIKPNGIIDLETLKNAITDQTMLVSVMAVNNEIGVVQPLKEIGKICRERGVFFHSDIAQGFGKIPIDVNEFNIDLASISGHKIYGPKGIGALYVRKKPRVRVTPLINGGGQERGMRSGTLPTPLIVGLGMAAEIAYSVMEKDTKHVNYLFDRFLNNIHNRISEVYLNGDKNQRYKGNINLSFAGVEGESIILAIKDLAVSSGSACTSASLEPSYVLRSMGIGEELAHTSIRFGIGRFTTEQEVDYAVDLICSKIDKLRELSPLWEMVQEGIDLKKIKWATH.

Pyridoxal 5'-phosphate is bound by residues 80-81 (AT), Asn-160, Gln-188, and 208-210 (SGH). Position 211 is an N6-(pyridoxal phosphate)lysine (Lys-211). Thr-248 serves as a coordination point for pyridoxal 5'-phosphate. Cys-334 functions as the Cysteine persulfide intermediate in the catalytic mechanism. Cys-334 contacts [2Fe-2S] cluster.

The protein belongs to the class-V pyridoxal-phosphate-dependent aminotransferase family. NifS/IscS subfamily. As to quaternary structure, homodimer. Forms a heterotetramer with IscU, interacts with other sulfur acceptors. Pyridoxal 5'-phosphate is required as a cofactor.

Its subcellular location is the cytoplasm. It carries out the reaction (sulfur carrier)-H + L-cysteine = (sulfur carrier)-SH + L-alanine. It participates in cofactor biosynthesis; iron-sulfur cluster biosynthesis. Master enzyme that delivers sulfur to a number of partners involved in Fe-S cluster assembly, tRNA modification or cofactor biosynthesis. Catalyzes the removal of elemental sulfur atoms from cysteine to produce alanine. Functions as a sulfur delivery protein for Fe-S cluster synthesis onto IscU, an Fe-S scaffold assembly protein, as well as other S acceptor proteins. The polypeptide is Cysteine desulfurase IscS (Rickettsia felis (strain ATCC VR-1525 / URRWXCal2) (Rickettsia azadi)).